Here is a 715-residue protein sequence, read N- to C-terminus: MSLNLPNPSLIGILLVISTHSGPQLIYKYPFDLSNDPSRDESKYALDDNEDDELYDHEESEDENEVNENEMYGVNSRNWDSKHIDYYMGTKSDLLKFLDEQDSRRRKITTTSPSEEKHTKEKHGLTKTISKSSTMASSSTTSPPESSIQGEIFGTDAAYICEMLAPPKQMCNTRFEMTIQDKLFLGLPVHRSDNGQWRSIGHNNEHDEEETHTAKNSLNMFHLVFVMNPPVIESNYRVDEMFHYVISRLSLVLRYEQQKHDYVSQQVKNILALRESLEGNESLLTEKSSLSRVIRDCFEGISTSTIANLSINGKLRSFQIPIKTEFHSLPDPSVPFLPASYLSSTVELLGDTSFINVGETSRYGHAFNSVQDEENSAEKIIVYFALLLLDDPESIIKDMKTETDSTLAKFIRMIEPTESLLKLSARNSKLDISQIKDFAFHLIYWRRARVILPLSSRSVYIVSPMAPITIKLYDDISFFNRRFPTLPSLPHFLKLLSPQSRKPQQFATVIPSKDHRDRYLQALGWLIKHGYVTQLQTFIWLKISRKIKIKVEEDIENENLAKKKKKQKNGSVTVATANSSKTEAPIMPTDNTSKQVSDSKDSDKPEDDEYASKPRLDGLHEHIDGTPIVTLVQGDDTIILDPGRATTLERRWINKIIYEECKLSPELTAVFYKLLKYMNGKNSLELLLLKENISRSELRKLLLSIEEHIISVRHW.

A signal peptide spans 1-21 (MSLNLPNPSLIGILLVISTHS). Disordered stretches follow at residues 104-149 (RRRK…SSIQ) and 562-621 (KKKK…GLHE). The segment covering 114–124 (SEEKHTKEKHG) has biased composition (basic and acidic residues). Positions 126-148 (TKTISKSSTMASSSTTSPPESSI) are enriched in low complexity. Residues 569-582 (NGSVTVATANSSKT) are compositionally biased toward polar residues. Basic and acidic residues predominate over residues 610–621 (YASKPRLDGLHE).

The protein belongs to the NPR3 family.

Its function is as follows. Mediates inactivation of the TORC1 complex in response to amino acid starvation. Required for meiotic nuclear division. This Candida albicans (strain SC5314 / ATCC MYA-2876) (Yeast) protein is Nitrogen permease regulator 3 (NPR3).